A 398-amino-acid polypeptide reads, in one-letter code: Succinyl-diaminopimelate desuccinylase (398 aa).

Histidine 68 contacts Zn(2+). Aspartate 70 is an active-site residue. Aspartate 101 is a Zn(2+) binding site. Glutamate 135 acts as the Proton acceptor in catalysis. Glutamate 136, glutamate 164, and histidine 349 together coordinate Zn(2+).

This sequence belongs to the peptidase M20A family. DapE subfamily. Homodimer. Requires Zn(2+) as cofactor. The cofactor is Co(2+).

The catalysed reaction is N-succinyl-(2S,6S)-2,6-diaminopimelate + H2O = (2S,6S)-2,6-diaminopimelate + succinate. It participates in amino-acid biosynthesis; L-lysine biosynthesis via DAP pathway; LL-2,6-diaminopimelate from (S)-tetrahydrodipicolinate (succinylase route): step 3/3. Functionally, catalyzes the hydrolysis of N-succinyl-L,L-diaminopimelic acid (SDAP), forming succinate and LL-2,6-diaminopimelate (DAP), an intermediate involved in the bacterial biosynthesis of lysine and meso-diaminopimelic acid, an essential component of bacterial cell walls. In Wolbachia pipientis wMel, this protein is Succinyl-diaminopimelate desuccinylase.